The sequence spans 337 residues: MTLPPSLRWTGDHLELLDQRRLPEEVSFLKLHQWRDVAEAIATMAVRGAPAIGVAAAWGVVLAAQANEDLDLAVSVLKSSRPTAVNLGWALDRIKASPAAQEPVDPQGLAAVAAALEADDRARTQTLVDHGVGLLASGSRVLHHCHTGAIATAGVGTALGVIAAGHARGVVRHAWLDETRPRLQGAALSAWELGCLGVPCTVIVDGASGLLMRRQEVDAVLVGCDRVAANGDVANKVGTYNLALVARAHGIPFYVCAPGSSMDRSTSDGDAITIEERPQEEITQHRGQRLAAPGAAAWNPAFDITPAHLVTALITEFGVIRPPYRDALQALPLDRQP.

Substrate-binding positions include 47-49, R81, and Q184; that span reads RGA. D225 serves as the catalytic Proton donor. 235–236 contributes to the substrate binding site; sequence NK.

This sequence belongs to the eIF-2B alpha/beta/delta subunits family. MtnA subfamily.

It catalyses the reaction 5-(methylsulfanyl)-alpha-D-ribose 1-phosphate = 5-(methylsulfanyl)-D-ribulose 1-phosphate. It participates in amino-acid biosynthesis; L-methionine biosynthesis via salvage pathway; L-methionine from S-methyl-5-thio-alpha-D-ribose 1-phosphate: step 1/6. Catalyzes the interconversion of methylthioribose-1-phosphate (MTR-1-P) into methylthioribulose-1-phosphate (MTRu-1-P). This Parasynechococcus marenigrum (strain WH8102) protein is Methylthioribose-1-phosphate isomerase.